The chain runs to 360 residues: Cannabinoid receptor 2 (360 aa).

The Extracellular segment spans residues 1 to 33 (MEECWVTEIANGSKDGLDSNPMKDYMILSGPQK). Residue Asn11 is glycosylated (N-linked (GlcNAc...) asparagine). The helical transmembrane segment at 34–59 (TAVAVLCTLLGLLSALENVAVLYLIL) threads the bilayer. Residues 60-71 (SSHQLRRKPSYL) are Cytoplasmic-facing. A helical membrane pass occupies residues 72–92 (FIGSLAGADFLASVVFACSFV). Topologically, residues 93–104 (NFHVFHGVDSKA) are extracellular. The chain crosses the membrane as a helical span at residues 105-129 (VFLLKIGSVTMTFTASVGSLLLTAI). Topologically, residues 130 to 149 (DRYLCLRYPPSYKALLTRGR) are cytoplasmic. Residues 150–172 (ALVTLGIMWVLSALVSYLPLMGW) traverse the membrane as a helical segment. At 173-188 (TCCPRPCSELFPLIPN) the chain is on the extracellular side. The helical transmembrane segment at 189-214 (DYLLSWLLFIAFLFSGIIYTYGHVLW) threads the bilayer. The Cytoplasmic portion of the chain corresponds to 215-246 (KAHQHVASLSGHQDRQVPGMARMRLDVRLAKT). Residues 247–267 (LGLVLAVLLICWFPVLALMAH) traverse the membrane as a helical segment. At 268–279 (SLATTLSDQVKK) the chain is on the extracellular side. Residues 280 to 301 (AFAFCSMLCLINSMVNPVIYAL) traverse the membrane as a helical segment. Residues 302-360 (RSGEIRSSAHHCLAHWKKCVRGLGSEAKEEAPRSSVTETEADGKITPWPDSRDLDLSDC) lie on the Cytoplasmic side of the membrane. The disordered stretch occupies residues 327-360 (EAKEEAPRSSVTETEADGKITPWPDSRDLDLSDC). 2 positions are modified to phosphoserine: Ser335 and Ser336. Residue Thr338 is modified to Phosphothreonine. The segment covering 351–360 (DSRDLDLSDC) has biased composition (basic and acidic residues). At Ser352 the chain carries Phosphoserine.

Belongs to the G-protein coupled receptor 1 family. Post-translationally, constitutively phosphorylated on Ser-352; phosphorylation increases cell internalization and desensitizes the receptor. In terms of tissue distribution, preferentially expressed in cells of the immune system with higher expression in B-cells and NK cells (at protein level). Expressed in skin in suprabasal layers and hair follicles (at protein level). Highly expressed in tonsil and to a lower extent in spleen, peripheral blood mononuclear cells, and thymus. PubMed:14657172 could not detect expression in normal brain. Expressed in brain by perivascular microglial cells and dorsal root ganglion sensory neurons (at protein level). Two isoforms are produced by alternative promoter usage and differ only in the 5' UTR: isoform CB2A is observed predominantly in testis with some expression in brain, while isoform CB2B is predominant in spleen and leukocytes.

Its subcellular location is the cell membrane. It localises to the cell projection. The protein localises to the dendrite. It is found in the perikaryon. Functionally, heterotrimeric G protein-coupled receptor for endocannabinoid 2-arachidonoylglycerol mediating inhibition of adenylate cyclase. May function in inflammatory response, nociceptive transmission and bone homeostasis. The polypeptide is Cannabinoid receptor 2 (CNR2) (Homo sapiens (Human)).